A 190-amino-acid polypeptide reads, in one-letter code: CASP-like protein 1E1 (190 aa).

The interval 1–23 is disordered; sequence MEHESKNKVDGMEMEKGKKESGS. Over 1–28 the chain is Cytoplasmic; the sequence is MEHESKNKVDGMEMEKGKKESGSRKGLE. The helical transmembrane segment at 29–49 threads the bilayer; it reads LTMRVLALVLTMVAATVLGVA. Over 50–83 the chain is Extracellular; the sequence is KQTKVVPIKLIPTLPPLNVSTTAKASYLSAFVYN. Asn67 carries N-linked (GlcNAc...) asparagine glycosylation. Residues 84–104 traverse the membrane as a helical segment; sequence ISANAIACGYTAISIVIVMIS. Over 105–111 the chain is Cytoplasmic; sequence KGKRSKS. Residues 112–132 traverse the membrane as a helical segment; it reads LLMAVLIGDLMMVALLFSSTG. At 133 to 163 the chain is on the extracellular side; that stretch reads AAGAIGLMGRHGNKHVMWKKVCGVFGKFCNQ. The chain crosses the membrane as a helical span at residues 164 to 184; the sequence is AAVSVAITLIASVVFMLLVVL. The Cytoplasmic portion of the chain corresponds to 185-190; the sequence is DALKLP.

The protein belongs to the Casparian strip membrane proteins (CASP) family. In terms of assembly, homodimer and heterodimers.

It is found in the cell membrane. This Arabidopsis thaliana (Mouse-ear cress) protein is CASP-like protein 1E1.